The primary structure comprises 833 residues: Major vault protein (833 aa).

MVP repeat units follow at residues 10–52, 54–115, 119–170, 171–223, 224–278, 280–328, 329–380, and 381–433; these read RYYY…VSVP, RHYC…RKLQ, PNTG…TVIY, PNTA…TMLS, ELKA…VSLN, KEYV…LVVG, KEEA…MALD, and RNEG…SIKT.

As to quaternary structure, the vault ribonucleoprotein particle is a huge (400 A x 670 A) cage structure of 12.9 MDa. It consists of a dimer of half-vaults, with each half-vault comprising 39 identical major vault protein (MVP) chains, PARP4 and one or more vault RNAs (vRNAs).

Its subcellular location is the cytoplasm. The protein localises to the nucleus. Its function is as follows. Required for normal vault structure. Vaults are multi-subunit structures that may act as scaffolds for proteins involved in signal transduction. Vaults may also play a role in nucleo-cytoplasmic transport. The protein is Major vault protein of Leishmania braziliensis.